We begin with the raw amino-acid sequence, 347 residues long: Holliday junction branch migration complex subunit RuvB (347 aa).

The interval 1–186 is large ATPase domain (RuvB-L); the sequence is MKDENSINFL…FGITARFELY (186 aa). Residues Leu25, Arg26, Gly67, Lys70, Thr71, Thr72, 133-135, Arg176, Tyr186, and Arg223 contribute to the ATP site; that span reads EDY. Thr71 lines the Mg(2+) pocket. The tract at residues 187–257 is small ATPAse domain (RuvB-S); it reads SEIELVEIIK…IVAIGLEMLR (71 aa). A head domain (RuvB-H) region spans residues 260–347; sequence GEGLDEQDRN…NLNENQRVSF (88 aa). Arg315 and Arg320 together coordinate DNA.

Belongs to the RuvB family. As to quaternary structure, homohexamer. Forms an RuvA(8)-RuvB(12)-Holliday junction (HJ) complex. HJ DNA is sandwiched between 2 RuvA tetramers; dsDNA enters through RuvA and exits via RuvB. An RuvB hexamer assembles on each DNA strand where it exits the tetramer. Each RuvB hexamer is contacted by two RuvA subunits (via domain III) on 2 adjacent RuvB subunits; this complex drives branch migration. In the full resolvosome a probable DNA-RuvA(4)-RuvB(12)-RuvC(2) complex forms which resolves the HJ.

The protein localises to the cytoplasm. The catalysed reaction is ATP + H2O = ADP + phosphate + H(+). Its function is as follows. The RuvA-RuvB-RuvC complex processes Holliday junction (HJ) DNA during genetic recombination and DNA repair, while the RuvA-RuvB complex plays an important role in the rescue of blocked DNA replication forks via replication fork reversal (RFR). RuvA specifically binds to HJ cruciform DNA, conferring on it an open structure. The RuvB hexamer acts as an ATP-dependent pump, pulling dsDNA into and through the RuvAB complex. RuvB forms 2 homohexamers on either side of HJ DNA bound by 1 or 2 RuvA tetramers; 4 subunits per hexamer contact DNA at a time. Coordinated motions by a converter formed by DNA-disengaged RuvB subunits stimulates ATP hydrolysis and nucleotide exchange. Immobilization of the converter enables RuvB to convert the ATP-contained energy into a lever motion, pulling 2 nucleotides of DNA out of the RuvA tetramer per ATP hydrolyzed, thus driving DNA branch migration. The RuvB motors rotate together with the DNA substrate, which together with the progressing nucleotide cycle form the mechanistic basis for DNA recombination by continuous HJ branch migration. Branch migration allows RuvC to scan DNA until it finds its consensus sequence, where it cleaves and resolves cruciform DNA. In Borreliella afzelii (strain PKo) (Borrelia afzelii), this protein is Holliday junction branch migration complex subunit RuvB.